A 189-amino-acid chain; its full sequence is Cytochrome bo(3) ubiquinol oxidase subunit 3 (189 aa).

At 1–10 the chain is on the cytoplasmic side; sequence MIKETMRNNK. The helical transmembrane segment at 11–31 threads the bilayer; it reads LFGLWIYLMSDCIIFAVLFAV. The Extracellular segment spans residues 32–52; the sequence is YAIISSNFSTNLINHKIFNLS. A helical membrane pass occupies residues 53-73; it reads YVFLETLILLLSSLSSGMLTI. Over 74–81 the chain is Cytoplasmic; that stretch reads QKNKNNIK. The helical transmembrane segment at 82–102 threads the bilayer; sequence IIYFYLLLTFFLGLSFLLMEV. Residues 103–122 lie on the Extracellular side of the membrane; that stretch reads NEFYKLILENCSPSQHAFFS. A helical transmembrane segment spans residues 123–143; it reads IFFTIVGVHGIHVFFGLIFIL. Over 144-161 the chain is Cytoplasmic; that stretch reads SILYQLFYLGITNTIRIR. A helical membrane pass occupies residues 162–182; that stretch reads ILCFSLFWHFLDIIWICVFTF. Residues 183 to 189 lie on the Extracellular side of the membrane; sequence VYLNGVI.

Belongs to the cytochrome c oxidase subunit 3 family. In terms of assembly, heterooctamer of two A chains, two B chains, two C chains and two D chains.

The protein resides in the cell membrane. Functionally, cytochrome bo(3) ubiquinol terminal oxidase is the component of the aerobic respiratory chain of E.coli that predominates when cells are grown at high aeration. Has proton pump activity across the membrane in addition to electron transfer, pumping 2 protons/electron. This chain is Cytochrome bo(3) ubiquinol oxidase subunit 3 (cyoC), found in Buchnera aphidicola subsp. Schizaphis graminum (strain Sg).